A 347-amino-acid polypeptide reads, in one-letter code: MAEQPVDLSDEALAQAVSAASRAFDQASTLDELAKAKTEHLGDRSPIALARQALGSLPKTDRADAGKRVNVARTQAQAGYDDRLAALRAERDAEVLVAERIDVTLPSTRQPVGARHPITILAENVADTFVAMGWELAEGPEVETEQFNFDALNFPPDHPARSEQDTFHIAPDGSRQVLRTHTSPVQVRTLLERELPVYVISIGRTFRTDELDATHTPVFHQVEGLAVDKGLTMAHLRGTLDAFARAQFGPQGRTRFRPHFFPFTEPSAEVDIWFPNKKGGPGWVEWGGCGMVNPNVLRACGIDPEVYSGFAFGMGLERTLQFRNGIPDMRDMVEGDVRFSLPFGVGA.

Glu265 contributes to the Mg(2+) binding site.

It belongs to the class-II aminoacyl-tRNA synthetase family. Phe-tRNA synthetase alpha subunit type 1 subfamily. Tetramer of two alpha and two beta subunits. It depends on Mg(2+) as a cofactor.

The protein resides in the cytoplasm. It catalyses the reaction tRNA(Phe) + L-phenylalanine + ATP = L-phenylalanyl-tRNA(Phe) + AMP + diphosphate + H(+). The sequence is that of Phenylalanine--tRNA ligase alpha subunit from Mycolicibacterium vanbaalenii (strain DSM 7251 / JCM 13017 / BCRC 16820 / KCTC 9966 / NRRL B-24157 / PYR-1) (Mycobacterium vanbaalenii).